The sequence spans 640 residues: MDTSAVSYLSSIVLNNNYKEWNNEKIIKWLSDTKKIQKVIVFKIYEITGRDLEFLSDKILFKMGVGIRDLLSFKSEFEILKNNYDNNNNNNNNNNNNNNNNNNNNNNNNNNNNNNNNNNNNNNNNNNNNKNNNNSNSNSTNINNNCSNNNSNNNHINFNSNSNITNIKNNDSKIKNKKEENKVPIIDLNQYEYVESISLGVFSVVGKYKRKGQENEFIAIKKIDILSLNEEKIIKEINKLYSINHPNIIKIIGYCKDQKNYYIASKYYPKGSIKKNTKQSPYSEMNAKRISVKILSGIDYLHSLNPPIIHRDIKCDNILLDENDDPILIDFGLSYKTIDDSTNLKTLCKKPFWASPDVNNQEIQIFSEKTDIYSFGCTIFEMIVGWESYSKKENNQPNLQKLPDNLTISCRLALGDIIGLEQNFKPDSKDLQKLSWFNESLPPIFQSQELTKSTTNTTTTTTTTTTPPPPPSPSSSSPSMNENKKIVTSDCLINSFKESGCLIFLNGELMYDNPFDKDCYQYNIVIPFGTPHLREVIHKDKNKSKHLDKIELFIDDHLAKGLVIKLGNFKLDLSKEFKKTPTFIDSIIEYLLDLLQKDNDDDDDDDVPESIILNIAVGFYKYISNFITYQYVLNQPSHFC.

The SAM domain occupies 21 to 84 (WNNEKIIKWL…SEFEILKNNY (64 aa)). A coiled-coil region spans residues 73–100 (FKSEFEILKNNYDNNNNNNNNNNNNNNN). The disordered stretch occupies residues 84–165 (YDNNNNNNNN…INFNSNSNIT (82 aa)). Positions 191–437 (YEYVESISLG…SKDLQKLSWF (247 aa)) constitute a Protein kinase domain. ATP contacts are provided by residues 197–205 (ISLGVFSVV) and K221. The active-site Proton acceptor is the D312. The disordered stretch occupies residues 448-482 (QELTKSTTNTTTTTTTTTTPPPPPSPSSSSPSMNE). Low complexity predominate over residues 453-465 (STTNTTTTTTTTT).

This sequence belongs to the protein kinase superfamily. Ser/Thr protein kinase family.

It catalyses the reaction L-seryl-[protein] + ATP = O-phospho-L-seryl-[protein] + ADP + H(+). The enzyme catalyses L-threonyl-[protein] + ATP = O-phospho-L-threonyl-[protein] + ADP + H(+). The polypeptide is Probable serine/threonine-protein kinase samkA (samkA) (Dictyostelium discoideum (Social amoeba)).